A 509-amino-acid polypeptide reads, in one-letter code: H/ACA ribonucleoprotein complex subunit DKC1 (509 aa).

The disordered stretch occupies residues 1-25 (MADAEAAMTFPKKHKKKKERKPLPE). A2 carries the N-acetylalanine modification. Residues 2 to 22 (ADAEAAMTFPKKHKKKKERKP) are nucleolar localization. The span at 11–20 (PKKHKKKKER) shows a compositional bias: basic residues. Glycyl lysine isopeptide (Lys-Gly) (interchain with G-Cter in SUMO2) cross-links involve residues K21, K40, and K44. The active-site Nucleophile is D126. K192 is covalently cross-linked (Glycyl lysine isopeptide (Lys-Gly) (interchain with G-Cter in SUMO2)). The region spanning 297–372 (HKRLVMKDSA…VVAKIKRVIM (76 aa)) is the PUA domain. The segment at 381-509 (WGLGPKASQK…KARAAEELSG (129 aa)) is disordered. Residue S388 is modified to Phosphoserine. Glycyl lysine isopeptide (Lys-Gly) (interchain with G-Cter in SUMO2) cross-links involve residues K395 and K425. Positions 416-425 (DYVDYSDSSK) are enriched in basic and acidic residues. A nuclear and nucleolar localization region spans residues 447 to 509 (KRKRDSDSDA…KARAAEELSG (63 aa)). Phosphoserine occurs at positions 452 and 454. T460 carries the post-translational modification Phosphothreonine. Residues 466 to 475 (RVKKEKKKKK) show a composition bias toward basic residues. Residues 481–490 (GEEAAEDGDG) show a composition bias toward acidic residues. Residue S508 is modified to Phosphoserine.

Belongs to the pseudouridine synthase TruB family. As to quaternary structure, part of the H/ACA small nucleolar ribonucleoprotein (H/ACA snoRNP) complex, which contains NHP2/NOLA2, GAR1/NOLA1, NOP10/NOLA3, and DKC1/NOLA4, which is presumed to be the catalytic subunit. The complex contains a stable core formed by binding of one or two NOP10-DKC1 heterodimers to NHP2; GAR1 subsequently binds to this core via DKC1. The complex binds a box H/ACA small nucleolar RNA (snoRNA), which may target the specific site of modification within the RNA substrate. During assembly, the complex contains NAF1 instead of GAR1/NOLA1. The complex also interacts with TERC, which contains a 3'-terminal domain related to the box H/ACA snoRNAs. Specific interactions with snoRNAs or TERC are mediated by GAR1 and NHP2. Associates with NOLC1/NOPP140. H/ACA snoRNPs interact with the SMN complex, consisting of SMN1 or SMN2, GEMIN2/SIP1, DDX20/GEMIN3, and GEMIN4. This is mediated by interaction between GAR1 and SMN1 or SMN2. The SMN complex may be required for correct assembly of the H/ACA snoRNP complex. Component of the telomerase holoenzyme complex composed of one molecule of TERT, one molecule of WRAP53/TCAB1, two molecules of H/ACA ribonucleoprotein complex subunits DKC1, NOP10, NHP2 and GAR1, and a telomerase RNA template component (TERC). The telomerase holoenzyme complex is associated with TEP1, SMG6/EST1A and POT1. Interacts with SHQ1; this interaction may lead to the stabilization of DKC1, from the time of its synthesis until its association with NOP10, NHP2, and NAF1 at the nascent H/ACA RNA. Interacts with HMBOX1. Interacts with DHX36.

It localises to the nucleus. The protein resides in the nucleolus. The protein localises to the cajal body. The catalysed reaction is uridine in 5S rRNA = pseudouridine in 5S rRNA. Its function is as follows. Catalytic subunit of H/ACA small nucleolar ribonucleoprotein (H/ACA snoRNP) complex, which catalyzes pseudouridylation of rRNA. This involves the isomerization of uridine such that the ribose is subsequently attached to C5, instead of the normal N1. Each rRNA can contain up to 100 pseudouridine ('psi') residues, which may serve to stabilize the conformation of rRNAs. Required for ribosome biogenesis and telomere maintenance. Also required for correct processing or intranuclear trafficking of TERC, the RNA component of the telomerase reverse transcriptase (TERT) holoenzyme. This Rattus norvegicus (Rat) protein is H/ACA ribonucleoprotein complex subunit DKC1 (Dkc1).